The sequence spans 284 residues: uncharacterized protein (284 aa).

This is an uncharacterized protein from Methanothermobacter thermautotrophicus (Methanobacterium thermoformicicum).